The chain runs to 206 residues: High frequency lysogenization protein HflD homolog (206 aa).

The protein belongs to the HflD family.

Its subcellular location is the cytoplasm. It is found in the cell inner membrane. The polypeptide is High frequency lysogenization protein HflD homolog (Idiomarina loihiensis (strain ATCC BAA-735 / DSM 15497 / L2-TR)).